We begin with the raw amino-acid sequence, 278 residues long: Orotidine 5'-phosphate decarboxylase (278 aa).

Substrate-binding positions include Asp-40, 65-67 (KTH), 96-105 (DRKFIDIGNT), Tyr-230, and Arg-248. Catalysis depends on Lys-98, which acts as the Proton donor.

Belongs to the OMP decarboxylase family.

It carries out the reaction orotidine 5'-phosphate + H(+) = UMP + CO2. It functions in the pathway pyrimidine metabolism; UMP biosynthesis via de novo pathway; UMP from orotate: step 2/2. This chain is Orotidine 5'-phosphate decarboxylase (pyrG), found in Penicillium chrysogenum (Penicillium notatum).